Reading from the N-terminus, the 324-residue chain is Aldo-keto reductase family 1 member A1-A (324 aa).

NADP(+) is bound by residues 10–19 (GQRMPTVGLG), Thr20, Trp21, and Asp44. Catalysis depends on Tyr49, which acts as the Proton donor. Residues Ser161, Asn162, Ser210, Leu212, Ser214, Lys262, Ser263, Val264, Thr265, Arg268, Gln271, and Asn272 each contribute to the NADP(+) site.

Belongs to the aldo/keto reductase family.

The protein resides in the cytoplasm. Its subcellular location is the cytosol. It localises to the apical cell membrane. The catalysed reaction is a primary alcohol + NADP(+) = an aldehyde + NADPH + H(+). The enzyme catalyses S-nitroso-CoA + NADPH + H(+) = sulfinamide-CoA + NADP(+). It catalyses the reaction S-nitrosoglutathione + NADPH + H(+) = S-(hydroxysulfenamide)glutathione + NADP(+). Catalyzes the NADPH-dependent reduction of a wide variety of carbonyl-containing compounds to their corresponding alcohols. Displays enzymatic activity towards endogenous metabolites such as aromatic and aliphatic aldehydes, ketones, monosaccharides and bile acids. Acts as an aldehyde-detoxification enzyme. Also acts as an inhibitor of protein S-nitrosylation by mediating degradation of S-nitroso-coenzyme A (S-nitroso-CoA), a cofactor required to S-nitrosylate proteins. Also acts as a S-nitroso-glutathione reductase by catalyzing the NADPH-dependent reduction of S-nitrosoglutathione. Displays no reductase activity towards retinoids. The protein is Aldo-keto reductase family 1 member A1-A (akr1a1a) of Danio rerio (Zebrafish).